The chain runs to 682 residues: Potassium-transporting ATPase ATP-binding subunit (682 aa).

Helical transmembrane passes span 34–54, 58–78, 219–239, and 254–274; these read PVMF…LAMV, IAGS…TVLF, IALT…TATL, and VLVA…LSAI. Catalysis depends on D307, which acts as the 4-aspartylphosphate intermediate. ATP-binding positions include D344, E348, 377–384, and K395; that span reads FTAQSRMS. The Mg(2+) site is built by D518 and D522. Helical transmembrane passes span 588–608, 616–636, and 662–682; these read FAII…LNVM, AILS…PLAL, and LVVP…LGLA.

The protein belongs to the cation transport ATPase (P-type) (TC 3.A.3) family. Type IA subfamily. In terms of assembly, the system is composed of three essential subunits: KdpA, KdpB and KdpC.

The protein resides in the cell inner membrane. The catalysed reaction is K(+)(out) + ATP + H2O = K(+)(in) + ADP + phosphate + H(+). In terms of biological role, part of the high-affinity ATP-driven potassium transport (or Kdp) system, which catalyzes the hydrolysis of ATP coupled with the electrogenic transport of potassium into the cytoplasm. This subunit is responsible for energy coupling to the transport system and for the release of the potassium ions to the cytoplasm. This is Potassium-transporting ATPase ATP-binding subunit from Salmonella paratyphi A (strain ATCC 9150 / SARB42).